Here is a 92-residue protein sequence, read N- to C-terminus: Small ribosomal subunit protein uS17 (92 aa).

This sequence belongs to the universal ribosomal protein uS17 family. As to quaternary structure, part of the 30S ribosomal subunit.

Its function is as follows. One of the primary rRNA binding proteins, it binds specifically to the 5'-end of 16S ribosomal RNA. The chain is Small ribosomal subunit protein uS17 from Cupriavidus necator (strain ATCC 17699 / DSM 428 / KCTC 22496 / NCIMB 10442 / H16 / Stanier 337) (Ralstonia eutropha).